Consider the following 97-residue polypeptide: Signal recognition particle 19 kDa protein (97 aa).

The protein belongs to the SRP19 family. As to quaternary structure, part of the signal recognition particle protein translocation system, which is composed of SRP and FtsY. Archaeal SRP consists of a 7S RNA molecule of 300 nucleotides and two protein subunits: SRP54 and SRP19.

Its subcellular location is the cytoplasm. Functionally, involved in targeting and insertion of nascent membrane proteins into the cytoplasmic membrane. Binds directly to 7S RNA and mediates binding of the 54 kDa subunit of the SRP. This Pyrobaculum calidifontis (strain DSM 21063 / JCM 11548 / VA1) protein is Signal recognition particle 19 kDa protein.